We begin with the raw amino-acid sequence, 370 residues long: DNA primase large subunit PriL (370 aa).

Residues Cys-230, Cys-301, Cys-310, and Cys-317 each contribute to the [4Fe-4S] cluster site. A disordered region spans residues 337 to 370 (EGEEAQGKEQGKEKDDGKEKENGKESEVKKKKEK).

Belongs to the eukaryotic-type primase large subunit family. In terms of assembly, heterodimer of a small subunit (PriS) and a large subunit (PriL). [4Fe-4S] cluster serves as cofactor.

Its function is as follows. Regulatory subunit of DNA primase, an RNA polymerase that catalyzes the synthesis of short RNA molecules used as primers for DNA polymerase during DNA replication. Stabilizes and modulates the activity of the small subunit, increasing the rate of DNA synthesis, and conferring RNA synthesis capability. The DNA polymerase activity may enable DNA primase to also catalyze primer extension after primer synthesis. May also play a role in DNA repair. This is DNA primase large subunit PriL from Methanosarcina mazei (strain ATCC BAA-159 / DSM 3647 / Goe1 / Go1 / JCM 11833 / OCM 88) (Methanosarcina frisia).